Reading from the N-terminus, the 230-residue chain is V-type proton ATPase subunit E (230 aa).

This sequence belongs to the V-ATPase E subunit family. V-ATPase is a heteromultimeric enzyme composed of a peripheral catalytic V1 complex (components A to H) attached to an integral membrane V0 proton pore complex (components: a, c, c', c'' and d).

Subunit of the peripheral V1 complex of vacuolar ATPase essential for assembly or catalytic function. V-ATPase is responsible for acidifying a variety of intracellular compartments in eukaryotic cells. This is V-type proton ATPase subunit E (VATE) from Citrus limon (Lemon).